The chain runs to 1891 residues: Transcription initiation factor TFIID subunit 1 (1891 aa).

3 disordered regions span residues 1–34 (MGPGWAGLLQDKGGGSPSVVMSDTDSDEESAGGG), 154–180 (KLMPPPPPPPGPLKKEKDQDDITGVSE), and 197–224 (ASEKVDFSSSSDSESEMGPQDAAQSESK). The Protein kinase 1 domain occupies 1–435 (MGPGWAGLLQ…VTQLHWEDDI (435 aa)). Residues 156–165 (MPPPPPPPGP) show a composition bias toward pro residues. A compositionally biased stretch (low complexity) spans 197-208 (ASEKVDFSSSSD). Phosphoserine; by autocatalysis is present on serine 328. Residues 535-556 (PDEKEEATSNSPSKENKKESSL) form a disordered region. The interval 538–997 (KEEATSNSPS…KIPNKPTQQK (460 aa)) is histone acetyltransferase (HAT). Position 565 is an N6-acetyllysine (lysine 565). Residues lysine 570 and lysine 583 each participate in a glycyl lysine isopeptide (Lys-Gly) (interchain with G-Cter in SUMO2) cross-link. Disordered stretches follow at residues 990–1009 (PNKPTQQKDDKEPQPVKKTV), 1128–1148 (MLQNKKTSSQLSREREEQERK), and 1254–1278 (RLKRNQEKEKLKGPPEKKPKKMKER). Composition is skewed to basic and acidic residues over residues 995–1004 (QQKDDKEPQP), 1139–1148 (SREREEQERK), and 1254–1270 (RLKRNQEKEKLKGPPEK). Residues 1216–1294 (VRIRTTKDEE…CGACGAIGHM (79 aa)) constitute a DNA-binding region (HMG box). Residues 1363 to 1650 (VLKFPKQQLP…TAKEAALEEA (288 aa)) are interaction with ASF1A and ASF1B. Residues 1372-1379 (PPKKKRRV) carry the Nuclear localization signal motif. Bromo domains follow at residues 1397-1505 (RRRT…LKEK) and 1519-1628 (LLDD…LTEY). A Protein kinase 2 domain is found at 1446–1891 (MDLQTLRENV…AGDTDLDSDE (446 aa)). Disordered stretches follow at residues 1651–1676 (ELESLDPMTPGPYTPQPPDLYDNNTS) and 1690–1891 (SNLS…DSDE). The span at 1659–1668 (TPGPYTPQPP) shows a compositional bias: pro residues. A phosphoserine mark is found at serine 1690 and serine 1693. Over residues 1690-1708 (SNLSVLDIPSATSEKQLTQ) the composition is skewed to polar residues. Acidic residues-rich tracts occupy residues 1711 to 1723 (GDGDGDLADEEEG) and 1741 to 1756 (EGEDDEEDAGSDEEGD). Positions 1764–1778 (LSESGSDSDVESGSL) are enriched in low complexity. Residues serine 1799, serine 1802, and serine 1820 each carry the phosphoserine modification. Residues 1830–1840 (KSNTQDTSFSS) show a composition bias toward polar residues. Residues 1846 to 1855 (VSEEEEDEEE) are compositionally biased toward acidic residues. Serine 1847 is subject to Phosphoserine. The segment covering 1858 to 1867 (SGPSVLSQVH) has biased composition (polar residues).

The protein belongs to the TAF1 family. As to quaternary structure, component of the TFIID basal transcription factor complex, composed of TATA-box-binding protein TBP, and a number of TBP-associated factors (TAFs). TFIID consists of at least TBP, TAF1, TAF2, TAF3, TAF4, TAF5, TAF6, TAF7, TAF8, TAF9, TAF10, TAF11, TAF12 and TAF13. Interacts with TAF7; the interaction is direct. TAF1, when part of the TFIID complex, interacts with C-terminus of TP53. Part of a TFIID-containing RNA polymerase II pre-initiation complex that is composed of TBP and at least GTF2A1, GTF2A2, GTF2E1, GTF2E2, GTF2F1, GTF2H2, GTF2H3, GTF2H4, GTF2H5, GTF2B, TCEA1, ERCC2, ERCC3, TAF1, TAF2, TAF3, TAF4, TAF5, TAF6, TAF7, TAF8, TAF9, TAF10, TAF11, TAF12 and TAF13. Component of some MLL1/MLL complex, at least composed of the core components KMT2A/MLL1, ASH2L, HCFC1/HCF1, WDR5 and RBBP5, as well as the facultative components BACC1, CHD8, E2F6, HSP70, INO80C, KANSL1, LAS1L, MAX, MCRS1, MGA, KAT8/MOF, PELP1, PHF20, PRP31, RING2, RUVB1/TIP49A, RUVB2/TIP49B, SENP3, TAF1, TAF4, TAF6, TAF7, TAF9 and TEX10. RB1 interacts with the N-terminal domain of TAF1. Interacts with ASF1A and ASF1B. Interacts (via bromo domains) with acetylated lysine residues on the N-terminus of histone H1.4, H2A, H2B, H3 and H4 (in vitro). The cofactor is Mg(2+). Phosphorylated by casein kinase II in vitro.

It is found in the nucleus. The enzyme catalyses L-seryl-[protein] + ATP = O-phospho-L-seryl-[protein] + ADP + H(+). The catalysed reaction is L-threonyl-[protein] + ATP = O-phospho-L-threonyl-[protein] + ADP + H(+). It catalyses the reaction L-lysyl-[protein] + acetyl-CoA = N(6)-acetyl-L-lysyl-[protein] + CoA + H(+). Its activity is regulated as follows. Autophosphorylates on Ser residues. Inhibited by retinoblastoma tumor suppressor protein, RB1. Binding to TAF1 or CIITA inhibits the histone acetyltransferase activity. The TFIID basal transcription factor complex plays a major role in the initiation of RNA polymerase II (Pol II)-dependent transcription. TFIID recognizes and binds promoters with or without a TATA box via its subunit TBP, a TATA-box-binding protein, and promotes assembly of the pre-initiation complex (PIC). The TFIID complex consists of TBP and TBP-associated factors (TAFs), including TAF1, TAF2, TAF3, TAF4, TAF5, TAF6, TAF7, TAF8, TAF9, TAF10, TAF11, TAF12 and TAF13. TAF1 is the largest component and core scaffold of the TFIID complex, involved in nucleating complex assembly. TAF1 forms a promoter DNA binding subcomplex of TFIID, together with TAF7 and TAF2. Contains novel N- and C-terminal Ser/Thr kinase domains which can autophosphorylate or transphosphorylate other transcription factors. Phosphorylates TP53 on 'Thr-55' which leads to MDM2-mediated degradation of TP53. Phosphorylates GTF2A1 and GTF2F1 on Ser residues. Possesses DNA-binding activity. Exhibits histone acetyltransferase activity towards histones H3 and H4. Essential for progression of the G1 phase of the cell cycle. This is Transcription initiation factor TFIID subunit 1 from Mus musculus (Mouse).